The sequence spans 786 residues: Endonuclease MutS2 (786 aa).

Position 335–342 (335–342) interacts with ATP; the sequence is GPNTGGKT. A Smr domain is found at 711-786; it reads LDLRGERFEN…GLGVTVVELK (76 aa).

The protein belongs to the DNA mismatch repair MutS family. MutS2 subfamily. As to quaternary structure, homodimer. Binds to stalled ribosomes, contacting rRNA.

Functionally, endonuclease that is involved in the suppression of homologous recombination and thus may have a key role in the control of bacterial genetic diversity. Its function is as follows. Acts as a ribosome collision sensor, splitting the ribosome into its 2 subunits. Detects stalled/collided 70S ribosomes which it binds and splits by an ATP-hydrolysis driven conformational change. Acts upstream of the ribosome quality control system (RQC), a ribosome-associated complex that mediates the extraction of incompletely synthesized nascent chains from stalled ribosomes and their subsequent degradation. Probably generates substrates for RQC. This is Endonuclease MutS2 from Bacillus cereus (strain ATCC 10987 / NRS 248).